We begin with the raw amino-acid sequence, 787 residues long: ISWI one complex protein 3 (787 aa).

Residues 1 to 22 (MDSPSNSIQNLQQEAQGSSSAQ) show a composition bias toward polar residues. 3 disordered regions span residues 1–137 (MDSP…AHEQ), 672–693 (ILEQKSTTDNNPSINTNPLPKD), and 749–787 (TEYDSEEYVDDEEDDEADIYDDNDNDSSFDDGRVKRQRT). Residues 40–50 (DQSVSVSQSSD) are compositionally biased toward low complexity. Residues 79 to 92 (KPKRKRPAPPKKKA) show a composition bias toward basic residues. The span at 100–137 (SNDKVEKKKTTSIAKDGKPTLKTNDKKVAPKPKPAHEQ) shows a compositional bias: basic and acidic residues. Residues 675–689 (QKSTTDNNPSINTNP) show a composition bias toward polar residues. Over residues 751–777 (YDSEEYVDDEEDDEADIYDDNDNDSSF) the composition is skewed to acidic residues. The span at 778 to 787 (DDGRVKRQRT) shows a compositional bias: basic and acidic residues.

As to quaternary structure, component of the ISW1A complex, which at least consists of ISW1 and IOC3.

The protein localises to the nucleus. Functionally, functions as a component of the ISW1A complex, which acts in remodeling the chromatin by catalyzing an ATP-dependent alteration in the structure of nucleosomal DNA. The ISW1A complex represses gene expression at initiation through specific positioning of a promoter proximal dinucleosome. The protein is ISWI one complex protein 3 (IOC3) of Saccharomyces cerevisiae (strain ATCC 204508 / S288c) (Baker's yeast).